The primary structure comprises 314 residues: Homoserine kinase (314 aa).

Position 95–105 (95–105) interacts with ATP; it reads PHSRGLGSSAS.

Belongs to the GHMP kinase family. Homoserine kinase subfamily.

Its subcellular location is the cytoplasm. The catalysed reaction is L-homoserine + ATP = O-phospho-L-homoserine + ADP + H(+). It functions in the pathway amino-acid biosynthesis; L-threonine biosynthesis; L-threonine from L-aspartate: step 4/5. Its function is as follows. Catalyzes the ATP-dependent phosphorylation of L-homoserine to L-homoserine phosphate. The sequence is that of Homoserine kinase from Mycobacterium ulcerans (strain Agy99).